Consider the following 24-residue polypeptide: RuBisCO large subunit-binding protein subunit beta, chloroplastic (24 aa).

Belongs to the chaperonin (HSP60) family. In terms of assembly, oligomer of probably six alpha and six beta subunits.

Its subcellular location is the plastid. It is found in the chloroplast. Its function is as follows. This protein binds RuBisCO small and large subunits and is implicated in the assembly of the enzyme oligomer. This Populus euphratica (Euphrates poplar) protein is RuBisCO large subunit-binding protein subunit beta, chloroplastic.